Reading from the N-terminus, the 113-residue chain is Large ribosomal subunit protein uL24 (113 aa).

Belongs to the universal ribosomal protein uL24 family. In terms of assembly, part of the 50S ribosomal subunit.

In terms of biological role, one of two assembly initiator proteins, it binds directly to the 5'-end of the 23S rRNA, where it nucleates assembly of the 50S subunit. Its function is as follows. One of the proteins that surrounds the polypeptide exit tunnel on the outside of the subunit. This Synechococcus elongatus (strain ATCC 33912 / PCC 7942 / FACHB-805) (Anacystis nidulans R2) protein is Large ribosomal subunit protein uL24.